A 135-amino-acid polypeptide reads, in one-letter code: MGFLTAVTQGLVRGADRMSKWTSKRGPRTFTKSRGAKKTGIYTSDRKFVQIKEMVPEFVVPDLTGFKLKPYVNYRAPAGIDTPLTAKALFQETVAPAIEKDFKEGTFDANNLEKYGFEPTQEGKLFQLYPKNFPR.

The transit peptide at 1–13 directs the protein to the mitochondrion; that stretch reads MGFLTAVTQGLVR.

It belongs to the mitochondrion-specific ribosomal protein mL41 family. In terms of assembly, component of the mitochondrial ribosome large subunit (39S) which comprises a 16S rRNA and about 50 distinct proteins. Interacts with BCL2.

The protein resides in the mitochondrion. Its function is as follows. Component of the mitochondrial ribosome large subunit. Also involved in apoptosis and cell cycle. Enhances p53/TP53 stability, thereby contributing to p53/TP53-induced apoptosis in response to growth-inhibitory condition. Enhances p53/TP53 translocation to the mitochondria. Has the ability to arrest the cell cycle at the G1 phase, possibly by stabilizing the CDKN1A and CDKN1B (p27Kip1) proteins. The chain is Large ribosomal subunit protein mL41 (Mrpl41) from Mus musculus (Mouse).